A 381-amino-acid polypeptide reads, in one-letter code: 4-hydroxyphenylpyruvate dioxygenase (381 aa).

VOC domains are found at residues 22-156 (GMDA…LVDR) and 184-338 (AIDH…IFTK). H187, H270, and E349 together coordinate Fe cation.

It belongs to the 4HPPD family. As to quaternary structure, homodimer. Requires Fe cation as cofactor.

It carries out the reaction 3-(4-hydroxyphenyl)pyruvate + O2 = homogentisate + CO2. It participates in amino-acid degradation; L-phenylalanine degradation; acetoacetate and fumarate from L-phenylalanine: step 3/6. The polypeptide is 4-hydroxyphenylpyruvate dioxygenase (hpd) (Streptomyces avermitilis (strain ATCC 31267 / DSM 46492 / JCM 5070 / NBRC 14893 / NCIMB 12804 / NRRL 8165 / MA-4680)).